A 1063-amino-acid polypeptide reads, in one-letter code: Lysine-specific demethylase phf2 (1063 aa).

The PHD-type zinc-finger motif lies at 5–56 (PVYCICRLPYDVTQFMIECDACKDWFHGSCVGVDEDEAPDIDIYHCPNCEKT). A JmjC domain is found at 197-353 (FSDARMANIV…MQMRAYEVEK (157 aa)). Threonine 246 is a 2-oxoglutarate binding site. Fe cation contacts are provided by histidine 249 and glutamate 251. Residues tyrosine 259 and lysine 266 each coordinate 2-oxoglutarate. Residue asparagine 321 coordinates Fe cation. 4 disordered regions span residues 448 to 546 (VSDS…LAAL), 704 to 761 (NIKE…SAGI), 773 to 864 (GIDY…DMFD), and 879 to 1045 (YVYP…MATA). The span at 460–477 (SEPSNSKPPAEEPPSALS) shows a compositional bias: low complexity. 2 stretches are compositionally biased toward basic and acidic residues: residues 513 to 540 (PPKEPKIKEGGKKKAKKVKEGVIPEKKP) and 723 to 745 (KSPDTSDEESLHIDTEAKTDVKG). Basic residues predominate over residues 746–755 (RNSKVSKKKG). The segment covering 776–791 (YSNNSQPPASPSTQEA) has biased composition (polar residues). The span at 813 to 833 (SNSQAKNNSHSSAASKKPSGA) shows a compositional bias: low complexity. Residues 842–852 (RPAKRLPKKTQ) show a composition bias toward basic residues. A compositionally biased stretch (basic and acidic residues) spans 920–929 (RQERPAREGA). The span at 953–964 (IKKKKKSAKKKP) shows a compositional bias: basic residues. The segment covering 965–975 (IVAEESHKLSH) has biased composition (basic and acidic residues). Composition is skewed to low complexity over residues 976–988 (DSSSPEPTPDSES) and 1021–1031 (SSSSSSQNASS). Residue serine 1021 is modified to Phosphoserine; by PKA.

This sequence belongs to the JHDM1 histone demethylase family. JHDM1D subfamily.

It localises to the nucleus. It is found in the nucleolus. The protein resides in the chromosome. Its subcellular location is the centromere. The protein localises to the kinetochore. Its function is as follows. Lysine demethylase that demethylates both histones and non-histone proteins. Mediates demethylation of dimethylated 'Lys-9' of histone H3 (H3K9me2). Recruited to trimethylated 'Lys-4' of histone H3 (H3K4me3) at rDNA promoters and promotes expression of rDNA. The protein is Lysine-specific demethylase phf2 (phf2) of Danio rerio (Zebrafish).